Reading from the N-terminus, the 245-residue chain is 7-cyano-7-deazaguanine synthase 2 (245 aa).

Position 12–22 (12–22 (FSGGQDSTTCL)) interacts with ATP. Residues Cys-200, Cys-215, Cys-218, and Cys-221 each contribute to the Zn(2+) site.

This sequence belongs to the QueC family. Requires Zn(2+) as cofactor.

The catalysed reaction is 7-carboxy-7-deazaguanine + NH4(+) + ATP = 7-cyano-7-deazaguanine + ADP + phosphate + H2O + H(+). Its pathway is purine metabolism; 7-cyano-7-deazaguanine biosynthesis. Its function is as follows. Catalyzes the ATP-dependent conversion of 7-carboxy-7-deazaguanine (CDG) to 7-cyano-7-deazaguanine (preQ(0)). This chain is 7-cyano-7-deazaguanine synthase 2, found in Mesorhizobium japonicum (strain LMG 29417 / CECT 9101 / MAFF 303099) (Mesorhizobium loti (strain MAFF 303099)).